The chain runs to 50 residues: Defensin-like protein 1 (50 aa).

4 disulfides stabilise this stretch: C2-C50, C14-C35, C20-C44, and C24-C46.

Belongs to the DEFL family.

Its subcellular location is the secreted. Functionally, possesses antimicrobial activity sensitive to inorganic cations. Binds specifically to the fungal plasma membrane. Has no inhibitory effect on insect gut alpha-amylase. The sequence is that of Defensin-like protein 1 from Aesculus hippocastanum (Horse chestnut).